The sequence spans 570 residues: Zona pellucida sperm-binding protein 4 (570 aa).

The first 19 residues, 1–19 (MWLLQPLLLCVPLSLAVHG), serve as a signal peptide directing secretion. Topologically, residues 20 to 545 (QQKPQVPDYP…SSSPIDSQAL (526 aa)) are extracellular. Residue N68 is glycosylated (N-linked (GlcNAc...) asparagine). Residues 177–218 (DLCDSVPKWDRLPCASSPITQGDCNKLGCCYKSEANSCYYGN) enclose the P-type domain. The ZP domain occupies 223 to 496 (RCTQDGHFSI…SSCRITCPVA (274 aa)). A glycan (N-linked (GlcNAc...) asparagine) is linked at N237. The O-linked (GalNAc...) threonine glycan is linked to T337. C402 and C476 form a disulfide bridge. N477 and N535 each carry an N-linked (GlcNAc...) asparagine glycan. The propeptide at 497–570 (RRRRHSDLHH…VSYLAIRKRR (74 aa)) is removed in mature form. Residues 546–566 (WMAGLSGTLIFGFLLVSYLAI) form a helical membrane-spanning segment. Residues 567-570 (RKRR) are Cytoplasmic-facing.

It belongs to the ZP domain family. ZPB subfamily. Post-translationally, proteolytically cleaved before the transmembrane segment to yield the secreted ectodomain incorporated in the zona pellucida. As to expression, expressed in oocytes.

The protein localises to the zona pellucida. It localises to the cell membrane. Its function is as follows. Component of the zona pellucida, an extracellular matrix surrounding oocytes which mediates sperm binding, induction of the acrosome reaction and prevents post-fertilization polyspermy. The zona pellucida is composed of 3 to 4 glycoproteins, ZP1, ZP2, ZP3, and ZP4. ZP4 may act as a sperm receptor. This chain is Zona pellucida sperm-binding protein 4 (ZP4), found in Felis catus (Cat).